The chain runs to 1275 residues: Mediator of RNA polymerase II transcription subunit 33B (1275 aa).

Residues 772 to 791 are compositionally biased toward low complexity; the sequence is GSQSLTPSSGSSSLSTSGGD. Residues 772–792 are disordered; it reads GSQSLTPSSGSSSLSTSGGDD.

The protein belongs to the Mediator complex subunit 33 family. In terms of assembly, component of the Mediator complex. In terms of tissue distribution, ubiquitous.

The protein resides in the nucleus. Its function is as follows. Component of the Mediator complex, a coactivator involved in the regulated transcription of nearly all RNA polymerase II-dependent genes. Mediator functions as a bridge to convey information from gene-specific regulatory proteins to the basal RNA polymerase II transcription machinery. The Mediator complex, having a compact conformation in its free form, is recruited to promoters by direct interactions with regulatory proteins and serves for the assembly of a functional preinitiation complex with RNA polymerase II and the general transcription factors. Involved in the repression of phenylpropanoid biosynthesis. May compete with MED33B for common binding partners or for occupancy in Mediator. This is Mediator of RNA polymerase II transcription subunit 33B (MED33B) from Arabidopsis thaliana (Mouse-ear cress).